A 291-amino-acid polypeptide reads, in one-letter code: Farnesyl diphosphate synthase (291 aa).

The isopentenyl diphosphate site is built by K44, R47, and H76. Residues D83 and D89 each coordinate Mg(2+). R94 serves as a coordination point for (2E)-geranyl diphosphate. Residue R95 coordinates isopentenyl diphosphate. (2E)-geranyl diphosphate-binding residues include K177, T178, Q215, and K232.

This sequence belongs to the FPP/GGPP synthase family. It depends on Mg(2+) as a cofactor.

It is found in the cytoplasm. It catalyses the reaction isopentenyl diphosphate + (2E)-geranyl diphosphate = (2E,6E)-farnesyl diphosphate + diphosphate. The sequence is that of Farnesyl diphosphate synthase (fps) from Micrococcus luteus (Micrococcus lysodeikticus).